A 355-amino-acid chain; its full sequence is Protein RecA (355 aa).

Residue 67 to 74 (GPESSGKT) participates in ATP binding.

This sequence belongs to the RecA family.

Its subcellular location is the cytoplasm. Functionally, can catalyze the hydrolysis of ATP in the presence of single-stranded DNA, the ATP-dependent uptake of single-stranded DNA by duplex DNA, and the ATP-dependent hybridization of homologous single-stranded DNAs. It interacts with LexA causing its activation and leading to its autocatalytic cleavage. The protein is Protein RecA of Histophilus somni (strain 129Pt) (Haemophilus somnus).